The sequence spans 496 residues: Probable E3 ubiquitin-protein ligase ARI12 (496 aa).

Residues 110–319 (NEYFCGACGE…GDLHFCTFDA (210 aa)) are TRIAD supradomain. Zn(2+) is bound by residues cysteine 114, cysteine 117, cysteine 131, histidine 133, cysteine 136, cysteine 139, cysteine 162, cysteine 172, cysteine 240, cysteine 243, histidine 248, cysteine 253, cysteine 267, cysteine 270, cysteine 286, and cysteine 289. The RING-type 1 zinc-finger motif lies at 114 to 172 (CGACGESHPHKNLASVSCGHRICTRCWTSHINKIISEKPAAEWNLWLKCPVRVGLHASC). The IBR-type zinc finger occupies 191-253 (FNYNQYLLRS…REDAHSPVDC (63 aa)). An RING-type 2; atypical zinc finger spans residues 267–297 (CPKCKLRIPRNQDNSLKMKCLPCNYVFCWFC).

The protein belongs to the RBR family. Ariadne subfamily. Zn(2+) is required as a cofactor. Preferentially expressed in roots.

The catalysed reaction is [E2 ubiquitin-conjugating enzyme]-S-ubiquitinyl-L-cysteine + [acceptor protein]-L-lysine = [E2 ubiquitin-conjugating enzyme]-L-cysteine + [acceptor protein]-N(6)-ubiquitinyl-L-lysine.. It functions in the pathway protein modification; protein ubiquitination. Might act as an E3 ubiquitin-protein ligase, or as part of E3 complex, which accepts ubiquitin from specific E2 ubiquitin-conjugating enzymes and then transfers it to substrates. The chain is Probable E3 ubiquitin-protein ligase ARI12 (ARI12) from Arabidopsis thaliana (Mouse-ear cress).